Here is a 1649-residue protein sequence, read N- to C-terminus: eIF-2-alpha kinase GCN2 (1649 aa).

Positions 1–26 are disordered; the sequence is MAGGRGAAGRGPAEPQESYSQRQDHE. Residues 25 to 137 enclose the RWD domain; the sequence is HELQALEAIY…HHVQSFLSEH (113 aa). The stretch at 146-205 forms a coiled coil; sequence HEEMLERQAQEKQQRLLEARQKEEQEQREILHEIQKRKEEIKEEKKRKEMAKQERLEITS. A disordered region spans residues 227 to 260; the sequence is HGGSPDFVGNGKARAHSSGRSRRERQYSVCSGEA. The residue at position 230 (Ser-230) is a Phosphoserine. The span at 239 to 249 shows a compositional bias: basic residues; sequence ARAHSSGRSRR. 2 Protein kinase domains span residues 296-539 and 590-1001; these read VYNA…HSFI and FEEL…SELL. ATP-binding positions include 596–604 and Lys-619; that span reads LGKGAFGAV. Residues 662 to 785 are disordered; the sequence is PAVPGTPPPD…CNEKDSRHEI (124 aa). At Thr-667 the chain carries Phosphothreonine. Over residues 705 to 721 the composition is skewed to polar residues; that stretch reads LSSSVEWSTSAERSNSA. 2 stretches are compositionally biased toward acidic residues: residues 731–740 and 754–764; these read SSDEEDEDER and SDSDIIFDNED. Asp-847 functions as the Proton acceptor in the catalytic mechanism. A Phosphothreonine modification is found at Thr-870. 2 positions are modified to phosphothreonine; by autocatalysis: Thr-899 and Thr-904. Positions 1022–1493 are histidyl-tRNA synthetase-like; sequence TDGKAYRTMM…DHVMQKLRTK (472 aa). The residue at position 1259 (Lys-1259) is an N6-acetyllysine.

Belongs to the protein kinase superfamily. Ser/Thr protein kinase family. GCN2 subfamily. As to quaternary structure, homodimer; homodimerization is important for kinase activation by uncharged tRNAs. Interacts with GCN1; this interaction stimulates EIF2AK4/GCN2 kinase activity and is impaired by IMPACT upon a variety of stress conditions, such as amino acid depletion, UV-C irradiation, proteasome inhibitor treatment and glucose deprivation. Interacts with DNAJC3; this interaction inhibits EIF2AK4/GCN2 kinase activity during endoplasmic reticulum (ER), hypothermic and amino acid-starving stress conditions. Interacts with MAP3K20; activates EIF2AK4/GCN2 kinase activity in response to moderate ribotoxic stress. Autophosphorylated; autophosphorylation on Thr-899 is increased upon amino acid starvation and in UV irradiation cells and inhibited in presence of IMPACT.

It is found in the cytoplasm. It catalyses the reaction L-seryl-[protein] + ATP = O-phospho-L-seryl-[protein] + ADP + H(+). It carries out the reaction L-threonyl-[protein] + ATP = O-phospho-L-threonyl-[protein] + ADP + H(+). Metabolic-stress sensing protein kinase that phosphorylates the alpha subunit of eukaryotic translation initiation factor 2 (EIF2S1/eIF-2-alpha) in response to low amino acid availability. Plays a role as an activator of the integrated stress response (ISR) required for adaptation to amino acid starvation. EIF2S1/eIF-2-alpha phosphorylation in response to stress converts EIF2S1/eIF-2-alpha into a global protein synthesis inhibitor, leading to a global attenuation of cap-dependent translation, and thus to a reduced overall utilization of amino acids, while concomitantly initiating the preferential translation of ISR-specific mRNAs, such as the transcriptional activator ATF4, and hence allowing ATF4-mediated reprogramming of amino acid biosynthetic gene expression to alleviate nutrient depletion. Required for the translational induction of protein kinase PRKCH following amino acid starvation. Binds uncharged tRNAs. Involved in cell cycle arrest by promoting cyclin D1 mRNA translation repression after the unfolded protein response pathway (UPR) activation or cell cycle inhibitor CDKN1A/p21 mRNA translation activation in response to amino acid deprivation. Plays a role in the consolidation of synaptic plasticity, learning as well as formation of long-term memory. Plays a role in neurite outgrowth inhibition. Plays a role in feeding behavior to maintain amino acid homeostasis; contributes to the innate aversion toward diets of imbalanced amino acid composition. Plays a proapoptotic role in response to glucose deprivation. Promotes global cellular protein synthesis repression in response to UV irradiation independently of the stress-activated protein kinase/c-Jun N-terminal kinase (SAPK/JNK) and p38 MAPK signaling pathways. Plays a role in the antiviral response against alphavirus infection; impairs early viral mRNA translation of the incoming genomic virus RNA, thus preventing alphavirus replication. This chain is eIF-2-alpha kinase GCN2, found in Rattus norvegicus (Rat).